The chain runs to 199 residues: Imidazole glycerol phosphate synthase subunit HisH (199 aa).

Residues 2–199 (RAVIIDYGVG…LTNVYRWLRK (198 aa)) form the Glutamine amidotransferase type-1 domain. Catalysis depends on Cys-76, which acts as the Nucleophile. Catalysis depends on residues His-178 and Glu-180.

In terms of assembly, heterodimer of HisH and HisF.

It localises to the cytoplasm. The enzyme catalyses 5-[(5-phospho-1-deoxy-D-ribulos-1-ylimino)methylamino]-1-(5-phospho-beta-D-ribosyl)imidazole-4-carboxamide + L-glutamine = D-erythro-1-(imidazol-4-yl)glycerol 3-phosphate + 5-amino-1-(5-phospho-beta-D-ribosyl)imidazole-4-carboxamide + L-glutamate + H(+). It carries out the reaction L-glutamine + H2O = L-glutamate + NH4(+). The protein operates within amino-acid biosynthesis; L-histidine biosynthesis; L-histidine from 5-phospho-alpha-D-ribose 1-diphosphate: step 5/9. Its function is as follows. IGPS catalyzes the conversion of PRFAR and glutamine to IGP, AICAR and glutamate. The HisH subunit catalyzes the hydrolysis of glutamine to glutamate and ammonia as part of the synthesis of IGP and AICAR. The resulting ammonia molecule is channeled to the active site of HisF. The sequence is that of Imidazole glycerol phosphate synthase subunit HisH from Sulfolobus acidocaldarius (strain ATCC 33909 / DSM 639 / JCM 8929 / NBRC 15157 / NCIMB 11770).